Reading from the N-terminus, the 536-residue chain is Lysosomal acid glucosylceramidase (536 aa).

Residues 1–39 form the signal peptide; that stretch reads MEFSSPSREECPKPSGRVSIMAGSLTGLLLLQAVSWASG. Disulfide bonds link Cys-43–Cys-55 and Cys-57–Cys-62. 3 N-linked (GlcNAc...) asparagine glycosylation sites follow: Asn-58, Asn-98, and Asn-185. The active-site Proton donor is the Glu-274. A glycan (N-linked (GlcNAc...) asparagine) is linked at Asn-309. The active-site Nucleophile is Glu-379. A glycan (N-linked (GlcNAc...) asparagine) is linked at Asn-501.

The protein belongs to the glycosyl hydrolase 30 family. As to quaternary structure, interacts with saposin-C. Interacts with SCARB2. Interacts with TCP1. Interacts with GRN; this interaction prevents aggregation of GBA1-SCARB2 complex via interaction with HSPA1A upon stress.

Its subcellular location is the lysosome membrane. The catalysed reaction is a beta-D-glucosyl-(1&lt;-&gt;1')-N-acylsphing-4-enine + H2O = an N-acylsphing-4-enine + D-glucose. The enzyme catalyses a beta-D-galactosyl-(1&lt;-&gt;1')-N-acylsphing-4-enine + H2O = an N-acylsphing-4-enine + D-galactose. It catalyses the reaction cholesteryl 3-beta-D-glucoside + H2O = cholesterol + D-glucose. It carries out the reaction a beta-D-glucosyl-(1&lt;-&gt;1')-N-acylsphing-4-enine + cholesterol = cholesteryl 3-beta-D-glucoside + an N-acylsphing-4-enine. The catalysed reaction is beta-D-glucosyl-N-(9Z-octadecenoyl)-sphing-4E-enine + cholesterol = N-(9Z-octadecenoyl)-sphing-4-enine + cholesteryl 3-beta-D-glucoside. The enzyme catalyses beta-D-glucosyl-N-octanoylsphing-4E-enine + cholesterol = N-octanoylsphing-4-enine + cholesteryl 3-beta-D-glucoside. It catalyses the reaction beta-D-glucosyl-N-dodecanoylsphing-4-enine + cholesterol = N-dodecanoylsphing-4-enine + cholesteryl 3-beta-D-glucoside. It carries out the reaction beta-D-glucosyl-(1&lt;-&gt;1)-N-octadecanoylsphing-4-enine + cholesterol = N-octadecanoylsphing-4-enine + cholesteryl 3-beta-D-glucoside. The catalysed reaction is beta-D-glucosyl-(1&lt;-&gt;1')-N-(15Z-tetracosenoyl)-sphing-4-enine + cholesterol = N-(15Z-tetracosenoyl)-sphing-4-enine + cholesteryl 3-beta-D-glucoside. The enzyme catalyses a beta-D-galactosyl-(1&lt;-&gt;1')-N-acylsphing-4-enine + cholesterol = cholesteryl 3-beta-D-galactoside + an N-acylsphing-4-enine. It catalyses the reaction 1-(beta-D-galactosyl)-N-dodecanoylsphing-4-enine + cholesterol = cholesteryl 3-beta-D-galactoside + N-dodecanoylsphing-4-enine. It carries out the reaction a beta-D-xylosyl-(1&lt;-&gt;1')-N-acylsphing-4-enine + cholesterol = cholesteryl 3-beta-D-xyloside + an N-acylsphing-4-enine. The catalysed reaction is beta-D-xylosyl-(1&lt;-&gt;1')-N-(9Z-octadecenoyl)-sphing-4-enine + cholesterol = cholesteryl 3-beta-D-xyloside + N-(9Z-octadecenoyl)-sphing-4-enine. It participates in steroid metabolism; cholesterol metabolism. The protein operates within sphingolipid metabolism. In terms of biological role, glucosylceramidase that catalyzes, within the lysosomal compartment, the hydrolysis of glucosylceramides/GlcCers (such as beta-D-glucosyl-(1&lt;-&gt;1')-N-acylsphing-4-enine) into free ceramides (such as N-acylsphing-4-enine) and glucose. Plays a central role in the degradation of complex lipids and the turnover of cellular membranes. Through the production of ceramides, participates in the PKC-activated salvage pathway of ceramide formation. Catalyzes the glucosylation of cholesterol, through a transglucosylation reaction where glucose is transferred from GlcCer to cholesterol. GlcCer containing mono-unsaturated fatty acids (such as beta-D-glucosyl-N-(9Z-octadecenoyl)-sphing-4-enine) are preferred as glucose donors for cholesterol glucosylation when compared with GlcCer containing same chain length of saturated fatty acids (such as beta-D-glucosyl-N-octadecanoyl-sphing-4-enine). Under specific conditions, may alternatively catalyze the reverse reaction, transferring glucose from cholesteryl 3-beta-D-glucoside to ceramide. Can also hydrolyze cholesteryl 3-beta-D-glucoside producing glucose and cholesterol. Catalyzes the hydrolysis of galactosylceramides/GalCers (such as beta-D-galactosyl-(1&lt;-&gt;1')-N-acylsphing-4-enine), as well as the transfer of galactose between GalCers and cholesterol in vitro, but with lower activity than with GlcCers. Contrary to GlcCer and GalCer, xylosylceramide/XylCer (such as beta-D-xyosyl-(1&lt;-&gt;1')-N-acylsphing-4-enine) is not a good substrate for hydrolysis, however it is a good xylose donor for transxylosylation activity to form cholesteryl 3-beta-D-xyloside. The sequence is that of Lysosomal acid glucosylceramidase (GBA1) from Pan troglodytes (Chimpanzee).